The primary structure comprises 582 residues: Myoneurin (582 aa).

The BTB domain occupies 24 to 89 (CDCTIVIGEF…IYTGTLNLDS (66 aa)). The interval 169–197 (QGALAKKSSQTKKKKKAFNSPKTGQNKTV) is disordered. Short sequence motifs (nuclear localization signal) lie at residues 174 to 190 (KKSSQTKKKKKAFNSPK) and 257 to 262 (KRKRGK). The span at 188–197 (SPKTGQNKTV) shows a compositional bias: polar residues. Serine 289 is subject to Phosphoserine. The C2H2-type 1; degenerate zinc finger occupies 302–324 (PMCNTRGKVFSEASSLRRHMRIH). C2H2-type zinc fingers lie at residues 330–352 (YVCHLCGKAFTQCNQLKTHVRTH), 358–381 (YKCELCDKGFAQKCQLVFHSRMHH), 387–409 (YKCDVCNLQFATSSNLKIHARKH), 415–437 (YVCDRCGQRFAQASTLTYHVRRH), 443–465 (YVCDTCGKAFAVSSSLITHSRKH), and 471–494 (FICELCGNSYTDIKNLKKHKTKVH). A disordered region spans residues 489–538 (HKTKVHSGADKTPDSSAEDHTLSEQDSIQKSPLSETMDVKPSDTTLPLAL). Residues 495–511 (SGADKTPDSSAEDHTLS) show a composition bias toward basic and acidic residues. The segment covering 512-522 (EQDSIQKSPLS) has biased composition (polar residues).

Belongs to the krueppel C2H2-type zinc-finger protein family.

The protein resides in the nucleus. The chain is Myoneurin (MYNN) from Pongo abelii (Sumatran orangutan).